The sequence spans 141 residues: Ribonuclease P protein component (141 aa).

2 disordered regions span residues 37-56 and 114-141; these read RTEE…VGFT and RRIT…VNGK. The segment covering 114 to 124 has biased composition (basic and acidic residues); that stretch reads RRITAKGERRS.

Belongs to the RnpA family. As to quaternary structure, consists of a catalytic RNA component (M1 or rnpB) and a protein subunit.

The catalysed reaction is Endonucleolytic cleavage of RNA, removing 5'-extranucleotides from tRNA precursor.. RNaseP catalyzes the removal of the 5'-leader sequence from pre-tRNA to produce the mature 5'-terminus. It can also cleave other RNA substrates such as 4.5S RNA. The protein component plays an auxiliary but essential role in vivo by binding to the 5'-leader sequence and broadening the substrate specificity of the ribozyme. This Brucella melitensis biotype 2 (strain ATCC 23457) protein is Ribonuclease P protein component.